A 369-amino-acid chain; its full sequence is Glutamate 5-kinase (369 aa).

Lys-9 serves as a coordination point for ATP. Substrate contacts are provided by Ser-49, Asp-136, and Asn-148. ATP-binding positions include 168–169 and 210–216; these read TD and TGGMLTK. The 81-residue stretch at 275-355 folds into the PUA domain; sequence QGSIWVDKGA…KGVLIYRDDW (81 aa).

This sequence belongs to the glutamate 5-kinase family.

It is found in the cytoplasm. It carries out the reaction L-glutamate + ATP = L-glutamyl 5-phosphate + ADP. It functions in the pathway amino-acid biosynthesis; L-proline biosynthesis; L-glutamate 5-semialdehyde from L-glutamate: step 1/2. Functionally, catalyzes the transfer of a phosphate group to glutamate to form L-glutamate 5-phosphate. This Streptococcus pneumoniae serotype 4 (strain ATCC BAA-334 / TIGR4) protein is Glutamate 5-kinase.